We begin with the raw amino-acid sequence, 88 residues long: Small ribosomal subunit protein uS15c (88 aa).

It belongs to the universal ribosomal protein uS15 family. In terms of assembly, part of the 30S ribosomal subunit.

It is found in the plastid. The protein resides in the chloroplast. In Lobularia maritima (Sweet alyssum), this protein is Small ribosomal subunit protein uS15c (rps15).